Here is a 655-residue protein sequence, read N- to C-terminus: p-hydroxybenzoic acid efflux pump subunit AaeB (655 aa).

The next 11 membrane-spanning stretches (helical) occupy residues 13–33 (FAVKLACAIVLALFIGFHFQL), 38–58 (WAVLTAAIVAAGPAFAAGGEP), 69–89 (LRIIGTFIGCIAALIIIISMI), 93–113 (LLMILVCCVWAGFCTWISSLV), 121–141 (WGLSGYTALIIVITIQTEPLL), 152–172 (EIVIGIGCAILADLLFSPRSI), 370–390 (LFWLWTGWTSGNGAMVMIAVV), 407–427 (FIYGTLAALPLGLLYFLVIIP), 431–451 (QSMLLLCLSLAVLGFFIGIEV), 459–479 (MGALASTINIIVLDNPMTFHF), and 482–502 (FLDSALGQIVGCMLAFIVILL).

The protein belongs to the aromatic acid exporter ArAE (TC 2.A.85) family.

The protein localises to the cell inner membrane. Forms an efflux pump with AaeA. Could function as a metabolic relief valve, allowing to eliminate certain compounds when they accumulate to high levels in the cell. In Salmonella dublin (strain CT_02021853), this protein is p-hydroxybenzoic acid efflux pump subunit AaeB.